Consider the following 273-residue polypeptide: Elongation factor Ts (273 aa).

Residues 80 to 83 (TDFV) are involved in Mg(2+) ion dislocation from EF-Tu.

This sequence belongs to the EF-Ts family.

It localises to the cytoplasm. In terms of biological role, associates with the EF-Tu.GDP complex and induces the exchange of GDP to GTP. It remains bound to the aminoacyl-tRNA.EF-Tu.GTP complex up to the GTP hydrolysis stage on the ribosome. The sequence is that of Elongation factor Ts from Tropheryma whipplei (strain Twist) (Whipple's bacillus).